Here is a 378-residue protein sequence, read N- to C-terminus: 1-acyl-sn-glycerol-3-phosphate acyltransferase delta (378 aa).

Residues 11–31 traverse the membrane as a helical segment; the sequence is FLCHLVFCYVFIASGLIVNAI. The HXXXXD motif signature appears at 96–101; sequence HKFEID. 3 consecutive transmembrane segments (helical) span residues 125–145, 311–331, and 338–358; these read ELAY…IFCT, WLFW…SMVS, and LASL…MIGV.

Belongs to the 1-acyl-sn-glycerol-3-phosphate acyltransferase family. Expressed at a high levels in the brain, at intermediate or low levels in skeletal muscles, gut, kidney, spleen and lung. Barely detectable in heart and liver.

The protein localises to the endoplasmic reticulum membrane. It catalyses the reaction a 1-acyl-sn-glycero-3-phosphate + an acyl-CoA = a 1,2-diacyl-sn-glycero-3-phosphate + CoA. The catalysed reaction is (4Z,7Z,10Z,13Z,16Z,19Z)-docosahexaenoyl-CoA + 1-hexadecanoyl-sn-glycero-3-phosphate = 1-hexadecanoyl-2-(4Z,7Z,10Z,13Z,16Z,19Z-docosahexaenoyl)-sn-glycero-3-phosphate + CoA. It carries out the reaction 1-octadecanoyl-sn-glycero-3-phosphate + (9Z,12Z)-octadecadienoyl-CoA = 1-octadecanoyl-2-(9Z,12Z-octadecadienoyl)-sn-glycero-3-phosphate + CoA. The enzyme catalyses 1-octadecanoyl-sn-glycero-3-phosphate + (4Z,7Z,10Z,13Z,16Z,19Z)-docosahexaenoyl-CoA = 1-octadecanoyl-2-(4Z,7Z,10Z,13Z,16Z,19Z-docosahexaenoyl)-sn-glycero-3-phosphate + CoA. It catalyses the reaction (4Z,7Z,10Z,13Z,16Z,19Z)-docosahexaenoyl-CoA + 1-(9Z-octadecenoyl)-sn-glycero-3-phosphate = 1-(9Z-octadecenoyl)-2-(4Z,7Z,10Z,13Z,16Z,19Z-docosahexaenoyl)-sn-glycero-3-phosphate + CoA. Its pathway is phospholipid metabolism; CDP-diacylglycerol biosynthesis; CDP-diacylglycerol from sn-glycerol 3-phosphate: step 2/3. Converts 1-acyl-sn-glycerol-3-phosphate (lysophosphatidic acid or LPA) into 1,2-diacyl-sn-glycerol-3-phosphate (phosphatidic acid or PA) by incorporating an acyl moiety at the sn-2 position of the glycerol backbone. Exhibits high acyl-CoA specificity for polyunsaturated fatty acyl-CoA, especially docosahexaenoyl-CoA (22:6-CoA, DHA-CoA). This chain is 1-acyl-sn-glycerol-3-phosphate acyltransferase delta (Agpat4), found in Mus musculus (Mouse).